The primary structure comprises 218 residues: 3-dehydroquinate dehydratase (218 aa).

Residues 29–31 (EFR) and R56 contribute to the 3-dehydroquinate site. H116 (proton donor/acceptor) is an active-site residue. The Schiff-base intermediate with substrate role is filled by K142. Residues R180, S200, and Q204 each coordinate 3-dehydroquinate.

The protein belongs to the type-I 3-dehydroquinase family. In terms of assembly, homodimer.

The catalysed reaction is 3-dehydroquinate = 3-dehydroshikimate + H2O. The protein operates within metabolic intermediate biosynthesis; chorismate biosynthesis; chorismate from D-erythrose 4-phosphate and phosphoenolpyruvate: step 3/7. Involved in the third step of the chorismate pathway, which leads to the biosynthesis of aromatic amino acids. Catalyzes the cis-dehydration of 3-dehydroquinate (DHQ) and introduces the first double bond of the aromatic ring to yield 3-dehydroshikimate. The chain is 3-dehydroquinate dehydratase from Methanococcus maripaludis (strain DSM 14266 / JCM 13030 / NBRC 101832 / S2 / LL).